A 288-amino-acid polypeptide reads, in one-letter code: Bifunctional protein FolD (288 aa).

Residues 166–168 and isoleucine 232 each bind NADP(+); that span reads GAS.

This sequence belongs to the tetrahydrofolate dehydrogenase/cyclohydrolase family. As to quaternary structure, homodimer.

The catalysed reaction is (6R)-5,10-methylene-5,6,7,8-tetrahydrofolate + NADP(+) = (6R)-5,10-methenyltetrahydrofolate + NADPH. The enzyme catalyses (6R)-5,10-methenyltetrahydrofolate + H2O = (6R)-10-formyltetrahydrofolate + H(+). Its pathway is one-carbon metabolism; tetrahydrofolate interconversion. Catalyzes the oxidation of 5,10-methylenetetrahydrofolate to 5,10-methenyltetrahydrofolate and then the hydrolysis of 5,10-methenyltetrahydrofolate to 10-formyltetrahydrofolate. The sequence is that of Bifunctional protein FolD from Salmonella heidelberg (strain SL476).